Here is a 1093-residue protein sequence, read N- to C-terminus: Probable phosphorylase b kinase regulatory subunit beta (1093 aa).

A disordered region spans residues 1–27; it reads MRDVPKSLGLSVTTPGGSSGAPDSGRH. Calmodulin-binding stretches follow at residues 6–27, 751–778, and 905–936; these read KSLG…SGRH, QLYH…IVDS, and EKLT…ILQR. Residue C1090 is the site of S-farnesyl cysteine attachment.

This sequence belongs to the phosphorylase b kinase regulatory chain family. Post-translationally, although the final Cys may be farnesylated, the terminal tripeptide is probably not removed, and the C-terminus is not methylated.

The protein localises to the cell membrane. Its pathway is glycan biosynthesis; glycogen metabolism. Functionally, phosphorylase b kinase catalyzes the phosphorylation of serine in certain substrates, including troponin I. The beta chain acts as a regulatory unit and modulates the activity of the holoenzyme in response to phosphorylation. The protein is Probable phosphorylase b kinase regulatory subunit beta of Drosophila melanogaster (Fruit fly).